We begin with the raw amino-acid sequence, 396 residues long: Elongation factor Tu (396 aa).

One can recognise a tr-type G domain in the interval 10 to 206; the sequence is KPHVNVGTIG…ALDTYIPTPE (197 aa). The tract at residues 19-26 is G1; the sequence is GHVDHGKT. 19–26 contributes to the GTP binding site; it reads GHVDHGKT. Mg(2+) is bound at residue threonine 26. Residues 60 to 64 are G2; the sequence is GITIN. Residues 81–84 form a G3 region; sequence DCPG. GTP is bound by residues 81-85 and 136-139; these read DCPGH and NKCD. Positions 136-139 are G4; sequence NKCD. Residues 174–176 form a G5 region; it reads SAK.

The protein belongs to the TRAFAC class translation factor GTPase superfamily. Classic translation factor GTPase family. EF-Tu/EF-1A subfamily. As to quaternary structure, monomer.

Its subcellular location is the cytoplasm. The catalysed reaction is GTP + H2O = GDP + phosphate + H(+). In terms of biological role, GTP hydrolase that promotes the GTP-dependent binding of aminoacyl-tRNA to the A-site of ribosomes during protein biosynthesis. The polypeptide is Elongation factor Tu (Burkholderia cenocepacia (strain HI2424)).